Reading from the N-terminus, the 413-residue chain is S-adenosylmethionine synthase (413 aa).

Position 15 (His-15) interacts with ATP. Asp-17 contributes to the Mg(2+) binding site. Glu-43 is a K(+) binding site. Residues Glu-56 and Gln-100 each coordinate L-methionine. The segment at 100–110 (QSPDISQGVNE) is flexible loop. ATP-binding positions include 171-173 (DGK), 248-249 (KF), Asp-257, 263-264 (RK), Ala-280, and Lys-284. Asp-257 is an L-methionine binding site. An L-methionine-binding site is contributed by Lys-288.

It belongs to the AdoMet synthase family. Homotetramer; dimer of dimers. Mg(2+) is required as a cofactor. The cofactor is K(+).

Its subcellular location is the cytoplasm. It catalyses the reaction L-methionine + ATP + H2O = S-adenosyl-L-methionine + phosphate + diphosphate. It participates in amino-acid biosynthesis; S-adenosyl-L-methionine biosynthesis; S-adenosyl-L-methionine from L-methionine: step 1/1. Its function is as follows. Catalyzes the formation of S-adenosylmethionine (AdoMet) from methionine and ATP. The overall synthetic reaction is composed of two sequential steps, AdoMet formation and the subsequent tripolyphosphate hydrolysis which occurs prior to release of AdoMet from the enzyme. This chain is S-adenosylmethionine synthase, found in Prochlorococcus marinus (strain AS9601).